The chain runs to 209 residues: Thymidine kinase (209 aa).

ATP-binding positions include 9–16 (AAMNAGKS) and 88–91 (DEAQ). Glutamate 89 serves as the catalytic Proton acceptor. Positions 146, 148, 183, and 186 each coordinate Zn(2+).

This sequence belongs to the thymidine kinase family. As to quaternary structure, homotetramer.

Its subcellular location is the cytoplasm. The enzyme catalyses thymidine + ATP = dTMP + ADP + H(+). This Legionella pneumophila (strain Lens) protein is Thymidine kinase.